A 325-amino-acid polypeptide reads, in one-letter code: MTTIILEVDNHTVTTRFILLGFPTRPAFQLLFFSIFLATYLLTLLENLLIILAIHSDGQLHKPMYFFLSHLSFLEMWYVTVISPKMLVDFLSHDKSISFNGCMTQLYFFVTFVCTEYILLAIMAFDRYVAICNPLRYPVIMTNQLCGTLAGGCWFCGLMTAMIKMVFIAQLHYCGMPQINHYFCDISPLLNVSCEDASQAEMVDFFLALMVIAIPLCVVVASYAAILATILRIPSAQGRQKAFSTCASHLTVVILFYSMTLFTYARPKLMYAYNSNKVVSVLYTVIVPLLNPIIYCLRNHEVKAALRKTIHCRGSGPQGNGAFSS.

The Extracellular portion of the chain corresponds to 1–30 (MTTIILEVDNHTVTTRFILLGFPTRPAFQL). N10 carries an N-linked (GlcNAc...) asparagine glycan. The helical transmembrane segment at 31–51 (LFFSIFLATYLLTLLENLLII) threads the bilayer. At 52 to 59 (LAIHSDGQ) the chain is on the cytoplasmic side. Residues 60–80 (LHKPMYFFLSHLSFLEMWYVT) traverse the membrane as a helical segment. Residues 81 to 104 (VISPKMLVDFLSHDKSISFNGCMT) are Extracellular-facing. A disulfide bridge connects residues C102 and C194. Residues 105–125 (QLYFFVTFVCTEYILLAIMAF) form a helical membrane-spanning segment. The Cytoplasmic portion of the chain corresponds to 126 to 144 (DRYVAICNPLRYPVIMTNQ). The helical transmembrane segment at 145–165 (LCGTLAGGCWFCGLMTAMIKM) threads the bilayer. At 166 to 202 (VFIAQLHYCGMPQINHYFCDISPLLNVSCEDASQAEM) the chain is on the extracellular side. N-linked (GlcNAc...) asparagine glycosylation occurs at N191. A helical membrane pass occupies residues 203-222 (VDFFLALMVIAIPLCVVVAS). Residues 223–242 (YAAILATILRIPSAQGRQKA) lie on the Cytoplasmic side of the membrane. A helical transmembrane segment spans residues 243–263 (FSTCASHLTVVILFYSMTLFT). Over 264 to 276 (YARPKLMYAYNSN) the chain is Extracellular. The helical transmembrane segment at 277-297 (KVVSVLYTVIVPLLNPIIYCL) threads the bilayer. The Cytoplasmic segment spans residues 298–325 (RNHEVKAALRKTIHCRGSGPQGNGAFSS).

Belongs to the G-protein coupled receptor 1 family.

It is found in the cell membrane. Its function is as follows. Odorant receptor. This Homo sapiens (Human) protein is Olfactory receptor 6Y1 (OR6Y1).